A 537-amino-acid chain; its full sequence is Chaperonin GroEL (537 aa).

ATP is bound by residues 29–32 (TLGP), 86–90 (DGTTT), Gly413, 477–479 (NAA), and Asp493.

The protein belongs to the chaperonin (HSP60) family. In terms of assembly, forms a cylinder of 14 subunits composed of two heptameric rings stacked back-to-back. Interacts with the co-chaperonin GroES.

Its subcellular location is the cytoplasm. The enzyme catalyses ATP + H2O + a folded polypeptide = ADP + phosphate + an unfolded polypeptide.. In terms of biological role, together with its co-chaperonin GroES, plays an essential role in assisting protein folding. The GroEL-GroES system forms a nano-cage that allows encapsulation of the non-native substrate proteins and provides a physical environment optimized to promote and accelerate protein folding. The protein is Chaperonin GroEL of Lactobacillus delbrueckii subsp. bulgaricus (strain ATCC 11842 / DSM 20081 / BCRC 10696 / JCM 1002 / NBRC 13953 / NCIMB 11778 / NCTC 12712 / WDCM 00102 / Lb 14).